The sequence spans 934 residues: MADPKTKGRGSGGNGSGRRLVIVESPTKARKLASYLGSGYIVESSRGHIRDLPRAASDVPAKYKSQPWARLGVNVDADFEPLYIISPEKRSTVSELRGLLKDVDELYLATDGDREGEAIAWHLLETLKPRIPVKRMVFHEITEPAIRAAAEHPRDLDIDLVDAQETRRILDRLYGYEVSPVLWKKVAPKLSAGRVQSVATRIIVARERDRMAFRSAAYWDILAKLDASVSDPDAAPPTFSARLTAVAGRRVATGRDFDSLGTLRKGDEVIVLDEGSATALAAGLDGTQLTVASAEEKPYARRPYPPFMTSTLQQEASRKLRFSAERTMSIAQRLYENGYITYMRTDSTTLSESAINAARTQARQLYGDEYVAPAPRQYTRKVKNAQEAHEAIRPAGETFATPDAVRRELDGPNIDDFRLYELIWQRTVASQMADARGMTLSLRITGMSGHQEVVFSATGRTLTFPGFLKAYVETVDELVGGEADDAERRLPHLTPGQRLDIVELTPDGHATNPPARYTEASLVKALEELGIGRPSTYSSIIKTIQDRGYVHKKGSALVPSWVAFAVTGLLEQHFGRLVDYDFTAAMEDELDEIAAGNERRTNWLNNFYFGGDHGVPDSVARSGGLKKLVGINLEGIDAREVNSIKLFDDTHGRPIYVRVGKNGPYLERLVAGDTGEPTPQRANLSDSITPDELTLQVAEELFATPQQGRTLGLDPETGHEIVAREGRFGPYVTEILPEPAADAAAAAQGVKKRQKAAGPKPRTGSLLRSMDLQTVTLEDALRLLSLPRVVGVDPASGEEITAQNGRYGPYLKRGNDSRSLVTEDQIFTITLDEALKIYAEPKRRGRQSASAPPLRELGTDPASGKPMVIKDGRFGPYVTDGETNASLRKGDDVASITDERAAELLADRRARGPAKRPARKAARKVPAKKAAKRD.

The interval 1–20 is disordered; it reads MADPKTKGRGSGGNGSGRRL. Residues 18-142 form the Toprim domain; that stretch reads RRLVIVESPT…VKRMVFHEIT (125 aa). Residues Glu-24 and Asp-111 each coordinate Mg(2+). The Topo IA-type catalytic domain maps to 157-616; that stretch reads DIDLVDAQET…FYFGGDHGVP (460 aa). Residues 191–196 form an interaction with DNA region; that stretch reads SAGRVQ. Catalysis depends on Tyr-342, which acts as the O-(5'-phospho-DNA)-tyrosine intermediate. 3 disordered regions span residues 746 to 765, 842 to 892, and 905 to 934; these read AAQG…RTGS, KRRG…KGDD, and LADR…AKRD. Over residues 911 to 934 the composition is skewed to basic residues; that stretch reads RGPAKRPARKAARKVPAKKAAKRD.

The protein belongs to the type IA topoisomerase family. As to quaternary structure, monomer. Requires Mg(2+) as cofactor.

The catalysed reaction is ATP-independent breakage of single-stranded DNA, followed by passage and rejoining.. Releases the supercoiling and torsional tension of DNA, which is introduced during the DNA replication and transcription, by transiently cleaving and rejoining one strand of the DNA duplex. Introduces a single-strand break via transesterification at a target site in duplex DNA. The scissile phosphodiester is attacked by the catalytic tyrosine of the enzyme, resulting in the formation of a DNA-(5'-phosphotyrosyl)-enzyme intermediate and the expulsion of a 3'-OH DNA strand. The free DNA strand then undergoes passage around the unbroken strand, thus removing DNA supercoils. Finally, in the religation step, the DNA 3'-OH attacks the covalent intermediate to expel the active-site tyrosine and restore the DNA phosphodiester backbone. This Mycobacterium bovis (strain ATCC BAA-935 / AF2122/97) protein is DNA topoisomerase 1.